Consider the following 7192-residue polypeptide: Nonribosomal peptide synthetase gloA (7192 aa).

The span at 1–48 shows a compositional bias: polar residues; the sequence is MTPSRSLENGEKQMNWNESPQTASPKNVLRDSNSNGNYVNGHGTNING. Positions 1-52 are disordered; that stretch reads MTPSRSLENGEKQMNWNESPQTASPKNVLRDSNSNGNYVNGHGTNINGDGSD. The Carrier 1 domain occupies 105–181; it reads HSTSKFKEEF…GLFATANFRP (77 aa). Ser142 is subject to O-(pantetheine 4'-phosphoryl)serine. Residues 239 to 634 are condensation 1; it reads EDVYPCTPLQ…TYTVQCLCNP (396 aa). The interval 675-1047 is adenylation 1; it reads QDQVNIQPAK…SLMYLGRCDS (373 aa). Residues 1190–1266 enclose the Carrier 2 domain; sequence APSTDAEKQV…DLAFVIQRRL (77 aa). Ser1227 carries the post-translational modification O-(pantetheine 4'-phosphoryl)serine. The condensation 2 stretch occupies residues 1316-1736; the sequence is EDIYPCTPLQ…MSWLSDYDEE (421 aa). The segment at 1758-2154 is adenylation 2; the sequence is QEQTKLRPNA…GRRDTQIKIR (397 aa). The Carrier 3 domain occupies 2288-2364; the sequence is APSTREECLV…ELAELLAKRS (77 aa). Residue Ser2325 is modified to O-(pantetheine 4'-phosphoryl)serine. The condensation 3 stretch occupies residues 2407–2829; sequence VEDVYPCTPL…LIAPEDQEQI (423 aa). An adenylation 3 region spans residues 2849 to 3245; sequence YKQVMARPQA…GRRDDQIKIR (397 aa). The Carrier 4 domain maps to 3378–3455; it reads TPSTKMEKVI…DLASVMTEHR (78 aa). An O-(pantetheine 4'-phosphoryl)serine modification is found at Ser3415. The segment at 3502–3891 is condensation 4; it reads EDIYPCTALQ…NGVLDQFVYI (390 aa). The segment at 3920 to 4320 is adenylation 4; the sequence is QEQALARPTA…ARRDMQVKIR (401 aa). In terms of domain architecture, Carrier 5 spans 4453-4529; it reads LPSTQVELQL…ELAVILDGRK (77 aa). The residue at position 4490 (Ser4490) is an O-(pantetheine 4'-phosphoryl)serine. The tract at residues 4574–4971 is condensation 5; it reads EDIYPCTPLQ…QFEYVVQKFH (398 aa). Positions 5013-5414 are adenylation 5; it reads DDHVAARPMA…GRQDLQVKIR (402 aa). The region spanning 5551–5627 is the Carrier 6 domain; sequence APDTDLGRLI…DLVNTLSNRS (77 aa). Ser5588 carries the O-(pantetheine 4'-phosphoryl)serine modification. The interval 5674–6071 is condensation 6; that stretch reads EDVYPSTPLQ…CVVQRILTQS (398 aa). Residues 6111–6507 form an adenylation 6 region; the sequence is QAQVKKSPAA…GRRDLQVKIR (397 aa). In terms of domain architecture, Carrier 7 spans 6645-6721; it reads NPSTTMERQL…DLAVVLTDRL (77 aa). O-(pantetheine 4'-phosphoryl)serine is present on Ser6682. Positions 6795-7178 are condensation 7; sequence NGPCDTRALK…NPLSPVKQVL (384 aa).

The protein belongs to the NRP synthetase family.

The protein operates within mycotoxin biosynthesis. In terms of biological role, nonribosomal peptide synthetase; part of the gene cluster that mediates the biosynthesis of pneumocandins, lipohexapeptides of the echinocandin family that prevent fungal cell wall formation by non-competitive inhibition of beta-1,3-glucan synthase. The 10,12-dimethylmyristoyl side chain is synthesized by the reducing polyketide synthase gloL/GLPKS4. The thioesterase gloN/GLHYD exclusively interacts with gloL/GLPKS4 to maintain turnover of the polyketide side chain. The 10R,12S-dimethylmyristic acid is then transferred to the first thiolation domain of the nonribosomal peptide synthetase gloA/GLNRPS4 by the acyl-AMP ligase gloD/GLligase, followed by its acylation to L-ornithine to trigger elongation of the cyclic hexapeptide. L-ornithine, 4R-hydroxyl-L-proline (generated from L-proline by the dioxygenase gloF/GLOXY2), 3S-hydroxyl-L-homotyrosine (generated by gloG/GLHtyB, gloH/GLHtyA, gloI/GLHtyC, gloJ/GLHtyD and hydroxylated at C-3 by the dioxygenase gloM/GLOXY1), 3R-hydroxyl-L-glutamine (generated from L-glutamine probably by the dioxygenase gloE/GLOXY3) and 3S-hydroxyl-L-proline (generated from L-proline by the dioxygenase gloF/GLOXY2 to yield pneumocandin B0), or 3S-hydroxyl-4S-methyl-L-proline (generated from L-leucine by the dioxygenase gloC/GLOXY4 to yield pneumocandin A0) are sequentially added to the growing chain. The last C domain of gloA/GLNRPS4 is proposed to be responsible for cyclization by condensation to form the peptide bond between L-ornithine and 3S-hydroxyl-4S-methyl-L-proline (for pneumocandin A0) or 3S-hydroxyl-L-proline (for pneumocandin B0). Finally, the subsequent C-4 hydroxylation of 3S-hydroxyl-L-homotyrosine and L-ornithine dihydroxylation at C-4 and C-5 are performed by the cytochrome P450 monooxygenases gloP/GLP450-1 and gloO/GLP450-2, respectively. The sequence is that of Nonribosomal peptide synthetase gloA from Glarea lozoyensis (strain ATCC 20868 / MF5171).